A 209-amino-acid polypeptide reads, in one-letter code: Dual specificity phosphatase 29 (209 aa).

Residues 44–193 (NHVNEVWPNL…LRELDIQLAL (150 aa)) form the Tyrosine-protein phosphatase domain. Position 137-144 (137-144 (NCAMGRSR)) interacts with substrate. Cysteine 138 functions as the Phosphocysteine intermediate in the catalytic mechanism.

Belongs to the protein-tyrosine phosphatase family. Non-receptor class dual specificity subfamily.

It is found in the cytoplasm. Its subcellular location is the nucleus. The enzyme catalyses O-phospho-L-tyrosyl-[protein] + H2O = L-tyrosyl-[protein] + phosphate. The catalysed reaction is O-phospho-L-seryl-[protein] + H2O = L-seryl-[protein] + phosphate. It catalyses the reaction O-phospho-L-threonyl-[protein] + H2O = L-threonyl-[protein] + phosphate. Functionally, dual specificity phosphatase able to dephosphorylate phosphotyrosine, phosphoserine and phosphothreonine residues within the same substrate, with a preference for phosphotyrosine as a substrate. Involved in the modulation of AMPK and MAPK1/2 signaling pathways. The polypeptide is Dual specificity phosphatase 29 (dusp29) (Xenopus tropicalis (Western clawed frog)).